The primary structure comprises 1209 residues: Limbin (1209 aa).

Residues 1–200 (MKFSKEIEVF…VLPNHGLHAA (200 aa)) lie on the Extracellular side of the membrane. An N-linked (GlcNAc...) asparagine glycan is attached at N120. A helical transmembrane segment spans residues 201-221 (GFCVAFILSLVLTWAVLFFMV). At 222–1209 (RYQCVKGSSL…KKAAWALGLN (988 aa)) the chain is on the cytoplasmic side. 3 coiled-coil regions span residues 355 to 394 (TAEC…SAVE), 553 to 697 (KQKL…EERD), and 920 to 1012 (ELQE…METD). Residues 689–700 (ERLEGEERDRGQ) are compositionally biased toward basic and acidic residues. Residues 689-714 (ERLEGEERDRGQEGVQSVRQRLKDDA) form a disordered region.

In terms of assembly, component of the EvC complex composed of EFCAB7, IQCE, EVC2 and EVC; built from two subcomplexes, EVC2:EVC and EFCAB7:IQCE. Interacts with EVC. Interacts (via N-terminal end) with EFCAB7. Interacts (via N-terminal end) with IQCE.

It localises to the cell membrane. The protein localises to the cytoplasm. It is found in the cytoskeleton. The protein resides in the cilium basal body. Its subcellular location is the cell projection. It localises to the cilium. The protein localises to the cilium membrane. It is found in the nucleus. Component of the EvC complex that positively regulates ciliary Hedgehog (Hh) signaling. Plays a critical role in bone formation and skeletal development. May be involved in early embryonic morphogenesis. In Bos taurus (Bovine), this protein is Limbin (EVC2).